The chain runs to 103 residues: N(4)-acetylcytidine amidohydrolase (103 aa).

The ASCH domain occupies 6 to 94 (ITFFQRFQND…IAEIYPNQTQ (89 aa)). Lysine 21 (proton acceptor) is an active-site residue. Threonine 24 serves as the catalytic Nucleophile. The active-site Proton donor is the glutamate 74.

The protein belongs to the N(4)-acetylcytidine amidohydrolase family.

It catalyses the reaction N(4)-acetylcytidine + H2O = cytidine + acetate + H(+). It carries out the reaction N(4)-acetyl-2'-deoxycytidine + H2O = 2'-deoxycytidine + acetate + H(+). The catalysed reaction is N(4)-acetylcytosine + H2O = cytosine + acetate + H(+). In terms of biological role, catalyzes the hydrolysis of N(4)-acetylcytidine (ac4C). This chain is N(4)-acetylcytidine amidohydrolase (yqfB), found in Salmonella schwarzengrund (strain CVM19633).